Consider the following 541-residue polypeptide: Neutral amino acid transporter B(0) (541 aa).

Residue Met-1 is modified to N-acetylmethionine. Residues 1 to 10 (MVADPPKGDP) are compositionally biased toward basic and acidic residues. Residues 1 to 32 (MVADPPKGDPKGLAAVEPTANGAPAQDPLEDS) are disordered. The Cytoplasmic segment spans residues 1–52 (MVADPPKGDPKGLAAVEPTANGAPAQDPLEDSGAAVGRCCSSRDQVRRCLRA). A helical membrane pass occupies residues 53-82 (NLLVLLTVVAVVAGVALGLAVSGAGGALAL). Residues 83 to 95 (GPARLIAFAFPGE) are Extracellular-facing. Residues 96–117 (LLLRLLKMIILPLVVCSLVGGA) form a helical membrane-spanning segment. Residues 118–131 (ASLDPSALGRLGAW) lie on the Cytoplasmic side of the membrane. Residues 132–154 (ALLFFLVTTLLASALGVGLALAL) form a helical membrane-spanning segment. Topologically, residues 155–225 (QPGAAFAAMN…GTLVKVPVAH (71 aa)) are extracellular. 2 N-linked (GlcNAc...) asparagine glycosylation sites follow: Asn-164 and Asn-215. A helical transmembrane segment spans residues 226–249 (EEEGMNILGLVVFAIVFGVALRKL). Residues 250-258 (GPEGEPLIR) lie on the Cytoplasmic side of the membrane. The helical transmembrane segment at 259-286 (FFNSFNDATMVLVSWIMWYAPVGILFLV) threads the bilayer. The Extracellular portion of the chain corresponds to 287-307 (ASKIVEMDDVGVLFASLGKYI). A helical transmembrane segment spans residues 308-329 (LCCLLGHAIHGLLVLPLIYFLF). Residues 330 to 334 (TRKNP) lie on the Cytoplasmic side of the membrane. An intramembrane region (discontinuously helical) is located at residues 335–365 (YRFLWGILTPLAMAFGTSSSSATLPLMMKCV). Over 366-374 (EERNGVAKH) the chain is Cytoplasmic. The helical transmembrane segment at 375–401 (ISRFVLPIGATVNMDGAALFQCVAAVF) threads the bilayer. Na(+) contacts are provided by Gly-383, Thr-385, and Asn-387. Over 402–414 (IAQLNRQSLDFVK) the chain is Extracellular. Residues 415–448 (IITILVTATASSVGAAGIPAGGVLTLAIILEAVS) constitute an intramembrane region (discontinuously helical). Residues 449 to 461 (LPVSEISLILAVD) lie on the Extracellular side of the membrane. A helical membrane pass occupies residues 462–483 (WLVDRSCTIINVEGDAFGAGLL). Residues Asn-472 and Asp-476 each contribute to the Na(+) site. Residues 484 to 541 (QHYVDRTEQRGSEPELTQVKSEVPLGSLPAPNEEGNPLLRHSPGAAGDAGACEKESVM) are Cytoplasmic-facing. The interval 493–541 (RGSEPELTQVKSEVPLGSLPAPNEEGNPLLRHSPGAAGDAGACEKESVM) is disordered. Ser-495, Ser-504, and Ser-539 each carry phosphoserine.

This sequence belongs to the dicarboxylate/amino acid:cation symporter (DAACS) (TC 2.A.23) family. SLC1A5 subfamily. In terms of assembly, homotrimer.

The protein localises to the cell membrane. It localises to the melanosome. It catalyses the reaction L-glutamine(out) + L-serine(in) + Na(+)(out) = L-glutamine(in) + L-serine(out) + Na(+)(in). The enzyme catalyses L-glutamine(in) + L-serine(out) + Na(+)(out) = L-glutamine(out) + L-serine(in) + Na(+)(in). The catalysed reaction is L-threonine(in) + L-glutamine(out) + Na(+)(out) = L-threonine(out) + L-glutamine(in) + Na(+)(in). It carries out the reaction L-threonine(out) + L-glutamine(in) + Na(+)(out) = L-threonine(in) + L-glutamine(out) + Na(+)(in). It catalyses the reaction L-asparagine(in) + L-glutamine(out) + Na(+)(out) = L-asparagine(out) + L-glutamine(in) + Na(+)(in). The enzyme catalyses L-asparagine(out) + L-glutamine(in) + Na(+)(out) = L-asparagine(in) + L-glutamine(out) + Na(+)(in). The catalysed reaction is L-glutamine(in) + L-alanine(out) + Na(+)(out) = L-glutamine(out) + L-alanine(in) + Na(+)(in). It carries out the reaction L-valine(out) + L-glutamine(in) + Na(+)(out) = L-valine(in) + L-glutamine(out) + Na(+)(in). It catalyses the reaction L-glutamine(in) + L-methionine(out) + Na(+)(out) = L-glutamine(out) + L-methionine(in) + Na(+)(in). The enzyme catalyses L-glutamine(in) + L-glutamate(out) + Na(+)(out) + H(+)(out) = L-glutamine(out) + L-glutamate(in) + Na(+)(in) + H(+)(in). The catalysed reaction is D-serine(in) + L-glutamine(out) + Na(+)(out) = D-serine(out) + L-glutamine(in) + Na(+)(in). It carries out the reaction D-serine(in) + L-alanine(out) + Na(+)(out) = D-serine(out) + L-alanine(in) + Na(+)(in). It catalyses the reaction nitrate(in) = nitrate(out). The enzyme catalyses iodide(out) = iodide(in). The catalysed reaction is thiocyanate(in) = thiocyanate(out). Sodium-coupled antiporter of neutral amino acids. In a tri-substrate transport cycle, exchanges neutral amino acids between the extracellular and intracellular compartments, coupled to the inward cotransport of at least one sodium ion. The preferred substrate is the essential amino acid L-glutamine, a precursor for biosynthesis of proteins, nucleotides and amine sugars as well as an alternative fuel for mitochondrial oxidative phosphorylation. Exchanges L-glutamine with other neutral amino acids such as L-serine, L-threonine and L-asparagine in a bidirectional way. Provides L-glutamine to proliferating stem and activated cells driving the metabolic switch toward cell differentiation. The transport cycle is usually pH-independent, with the exception of L-glutamate. Transports extracellular L-glutamate coupled to the cotransport of one proton and one sodium ion in exchange for intracellular L-glutamine counter-ion. May provide for L-glutamate uptake in glial cells regulating glutamine/glutamate cycle in the nervous system. Can transport D-amino acids. Mediates D-serine release from the retinal glia potentially affecting NMDA receptor function in retinal neurons. Displays sodium- and amino acid-dependent but uncoupled channel-like anion conductance with a preference SCN(-) &gt;&gt; NO3(-) &gt; I(-) &gt; Cl(-). Through binding of the fusogenic protein syncytin-1/ERVW-1 may mediate trophoblasts syncytialization, the spontaneous fusion of their plasma membranes, an essential process in placental development. This chain is Neutral amino acid transporter B(0) (SLC1A5), found in Oryctolagus cuniculus (Rabbit).